The sequence spans 142 residues: Neurofilament heavy polypeptide (142 aa).

An IF rod domain is found at 1-142; the sequence is MRGAVLRLGA…EAAKVNTDAM (142 aa). A coiled-coil region spans residues 26 to 74; the sequence is IAHVRQRLDDEARQRQEAEAAARALARFAQEAEAARVELQKKAQALQEE.

It belongs to the intermediate filament family. Forms heterodimers with NEFL; which can further hetero-oligomerize (in vitro). Forms heterodimers with INA (in vitro). Post-translationally, there are a number of repeats of the tripeptide K-S-P, NFH is phosphorylated on a number of the serines in this motif. It is thought that phosphorylation of NFH results in the formation of interfilament cross bridges that are important in the maintenance of axonal caliber. In terms of processing, phosphorylation seems to play a major role in the functioning of the larger neurofilament polypeptides (NF-M and NF-H), the levels of phosphorylation being altered developmentally and coincidentally with a change in the neurofilament function. Phosphorylated in the head and rod regions by the PKC kinase PKN1, leading to the inhibition of polymerization.

It localises to the cytoplasm. The protein localises to the cytoskeleton. It is found in the cell projection. Its subcellular location is the axon. In terms of biological role, neurofilaments usually contain three intermediate filament proteins: NEFL, NEFM, and NEFH which are involved in the maintenance of neuronal caliber. NEFH has an important function in mature axons that is not subserved by the two smaller NF proteins. May additionally cooperate with the neuronal intermediate filament proteins PRPH and INA to form neuronal filamentous networks. The protein is Neurofilament heavy polypeptide (NEFH) of Sus scrofa (Pig).